The sequence spans 436 residues: UDP-N-acetylglucosamine 1-carboxyvinyltransferase 1 (436 aa).

22–23 (KN) serves as a coordination point for phosphoenolpyruvate. R93 contacts UDP-N-acetyl-alpha-D-glucosamine. Catalysis depends on C117, which acts as the Proton donor. 2-(S-cysteinyl)pyruvic acid O-phosphothioketal is present on C117. Residues 122–126 (RPIDQ), D306, and V328 each bind UDP-N-acetyl-alpha-D-glucosamine.

Belongs to the EPSP synthase family. MurA subfamily.

The protein localises to the cytoplasm. The catalysed reaction is phosphoenolpyruvate + UDP-N-acetyl-alpha-D-glucosamine = UDP-N-acetyl-3-O-(1-carboxyvinyl)-alpha-D-glucosamine + phosphate. Its pathway is cell wall biogenesis; peptidoglycan biosynthesis. Functionally, cell wall formation. Adds enolpyruvyl to UDP-N-acetylglucosamine. Essential for cell growth. The protein is UDP-N-acetylglucosamine 1-carboxyvinyltransferase 1 of Bacillus subtilis (strain 168).